Reading from the N-terminus, the 238-residue chain is Ion-translocating oxidoreductase complex subunit E (238 aa).

Helical transmembrane passes span 41–61, 71–91, 95–115, 130–150, and 184–204; these read LGLGLATMLVLACSNAAVSLV, LPAFVMIIAALTTCIELLMQA, ELYQVLGIFIPLITTNCVILG, SFDGLLMGLGFALVLLVLGGL, and GFLLAILPPGAFIMLGLLIAL.

Belongs to the NqrDE/RnfAE family. The complex is composed of six subunits: RnfA, RnfB, RnfC, RnfD, RnfE and RnfG.

The protein resides in the cell inner membrane. In terms of biological role, part of a membrane-bound complex that couples electron transfer with translocation of ions across the membrane. This Pseudomonas aeruginosa (strain UCBPP-PA14) protein is Ion-translocating oxidoreductase complex subunit E.